We begin with the raw amino-acid sequence, 307 residues long: Small ribosomal subunit biogenesis GTPase RsgA (307 aa).

Positions 85-242 (RQDAWKTKLI…LIDSPGLQEF (158 aa)) constitute a CP-type G domain. Residues 135-138 (NKAD) and 184-192 (GQSGMGKST) contribute to the GTP site. Zn(2+) is bound by residues Cys266, Cys271, His273, and Cys279.

The protein belongs to the TRAFAC class YlqF/YawG GTPase family. RsgA subfamily. In terms of assembly, monomer. Associates with 30S ribosomal subunit, binds 16S rRNA. Zn(2+) serves as cofactor.

It is found in the cytoplasm. Its function is as follows. One of several proteins that assist in the late maturation steps of the functional core of the 30S ribosomal subunit. Helps release RbfA from mature subunits. May play a role in the assembly of ribosomal proteins into the subunit. Circularly permuted GTPase that catalyzes slow GTP hydrolysis, GTPase activity is stimulated by the 30S ribosomal subunit. The protein is Small ribosomal subunit biogenesis GTPase RsgA of Neisseria meningitidis serogroup C (strain 053442).